A 366-amino-acid chain; its full sequence is Acetylserotonin O-methyltransferase 3 (366 aa).

4 residues coordinate S-adenosyl-L-homocysteine: G209, D232, D253, and K267. The Proton acceptor role is filled by H271. Active-site residues include E302 and E332.

This sequence belongs to the class I-like SAM-binding methyltransferase superfamily. Cation-independent O-methyltransferase family. Homodimer. Expressed at low levels in roots, shoots, leaves, stems and flowers.

Its subcellular location is the cytoplasm. It catalyses the reaction N-acetylserotonin + S-adenosyl-L-methionine = melatonin + S-adenosyl-L-homocysteine + H(+). It functions in the pathway aromatic compound metabolism; melatonin biosynthesis; melatonin from serotonin: step 1/2. Methyltransferase which catalyzes the transfer of a methyl group onto N-acetylserotonin, producing melatonin (N-acetyl-5-methoxytryptamine). This Oryza sativa subsp. japonica (Rice) protein is Acetylserotonin O-methyltransferase 3.